The following is a 387-amino-acid chain: Succinate--CoA ligase [ADP-forming] subunit beta (387 aa).

Residues Lys9–Leu244 form the ATP-grasp domain. ATP is bound by residues Lys46, Gly53–Gly55, Gly102, and Glu107. The Mg(2+) site is built by Asn199 and Asp213. Substrate contacts are provided by residues Asn264 and Gly321–Val323.

The protein belongs to the succinate/malate CoA ligase beta subunit family. Heterotetramer of two alpha and two beta subunits. Requires Mg(2+) as cofactor.

The catalysed reaction is succinate + ATP + CoA = succinyl-CoA + ADP + phosphate. It carries out the reaction GTP + succinate + CoA = succinyl-CoA + GDP + phosphate. It participates in carbohydrate metabolism; tricarboxylic acid cycle; succinate from succinyl-CoA (ligase route): step 1/1. Succinyl-CoA synthetase functions in the citric acid cycle (TCA), coupling the hydrolysis of succinyl-CoA to the synthesis of either ATP or GTP and thus represents the only step of substrate-level phosphorylation in the TCA. The beta subunit provides nucleotide specificity of the enzyme and binds the substrate succinate, while the binding sites for coenzyme A and phosphate are found in the alpha subunit. The protein is Succinate--CoA ligase [ADP-forming] subunit beta of Xylella fastidiosa (strain 9a5c).